The following is a 239-amino-acid chain: tRNA (guanine-N(7)-)-methyltransferase (239 aa).

The S-adenosyl-L-methionine site is built by glutamate 69, glutamate 94, aspartate 121, and aspartate 144. The active site involves aspartate 144. Lysine 148 contacts substrate. Positions 150 to 155 (RHNKRR) are interaction with RNA. Residues aspartate 180 and 217-220 (TKFE) each bind substrate.

The protein belongs to the class I-like SAM-binding methyltransferase superfamily. TrmB family. In terms of assembly, monomer.

It catalyses the reaction guanosine(46) in tRNA + S-adenosyl-L-methionine = N(7)-methylguanosine(46) in tRNA + S-adenosyl-L-homocysteine. Its pathway is tRNA modification; N(7)-methylguanine-tRNA biosynthesis. In terms of biological role, catalyzes the formation of N(7)-methylguanine at position 46 (m7G46) in tRNA. In Cronobacter sakazakii (strain ATCC BAA-894) (Enterobacter sakazakii), this protein is tRNA (guanine-N(7)-)-methyltransferase.